Consider the following 225-residue polypeptide: MOB-like protein phocein (225 aa).

Residues Cys-92, Cys-97, Cys-110, His-113, Cys-119, His-127, His-169, and His-174 each contribute to the Zn(2+) site.

It belongs to the MOB1/phocein family. Binds STRN4. Interacts with DNM1 and EPS15. Interacts with nucleoside diphosphate kinase. Interacts with CTTNBP2. Interacts with CTTNBP2NL. Part of the core of STRIPAK complexes composed of PP2A catalytic and scaffolding subunits, the striatins (PP2A regulatory subunits), the striatin-associated proteins MOB4, STRIP1 and STRIP2, PDCD10 and members of the STE20 kinases, such as STK24 and STK26. In terms of processing, phosphorylated on serine residues. Highly expressed in adrenal gland, spinal cord, brain and cerebellum. Detected at lower levels in heart and skeletal muscle, and at very low levels in spleen, liver and intestine.

Its subcellular location is the cytoplasm. It is found in the membrane. The protein localises to the golgi apparatus. It localises to the golgi stack membrane. Part of the striatin-interacting phosphatase and kinase (STRIPAK) complexes. STRIPAK complexes have critical roles in protein (de)phosphorylation and are regulators of multiple signaling pathways including Hippo, MAPK, nuclear receptor and cytoskeleton remodeling. Different types of STRIPAK complexes are involved in a variety of biological processes such as cell growth, differentiation, apoptosis, metabolism and immune regulation. The polypeptide is MOB-like protein phocein (Mob4) (Rattus norvegicus (Rat)).